A 570-amino-acid chain; its full sequence is Peptidyl-prolyl cis-trans isomerase CYP63 (570 aa).

The region spanning 10–174 (FLDVSIGGDP…SPVKIIDCGE (165 aa)) is the PPIase cyclophilin-type domain. A disordered region spans residues 180-570 (AHDAAEREKG…GKRGLVSYAD (391 aa)). Basic and acidic residues predominate over residues 203 to 219 (VSDREAKETRKKESNEK). 2 stretches are compositionally biased toward low complexity: residues 229–238 (SSDSYSSSSD) and 246–259 (EAYS…SSSS). Residues 262 to 292 (KHRKRKSTTRHKGRRGERKSKGRSGKKKARP) are compositionally biased toward basic residues. Residues 297–309 (STNSSSDTESSSS) are compositionally biased toward low complexity. Residues 323-339 (VKVDNADQHANLDDSVK) are compositionally biased toward basic and acidic residues. Serine 340 is subject to Phosphoserine. Over residues 340–351 (SRSRSPIRRRNQ) the composition is skewed to basic residues. Residues 352 to 365 (NSRSKSPSRSPVRV) show a composition bias toward low complexity. Basic and acidic residues-rich tracts occupy residues 387–397 (SPREKPTEETV) and 437–467 (SPPR…ERSP). Positions 468 to 490 (RGRFRSPPRRRSPPRYNRRRRST) are enriched in basic residues. The segment covering 495–505 (DGYRRRLRDGS) has biased composition (basic and acidic residues). The segment covering 509–523 (SPRHRSRSQSPRKRQ) has biased composition (basic residues). The segment covering 546 to 555 (SPAESLSPSH) has biased composition (low complexity).

Belongs to the cyclophilin-type PPIase family. As to quaternary structure, interacts with SNRNP35, RNU1, SCL28, SCL30, SR30 and SR34. The binding to SR34 is phosphorylation-dependent. In terms of tissue distribution, ubiquitous.

The protein localises to the nucleus. It is found in the nucleoplasm. The protein resides in the nucleus speckle. It catalyses the reaction [protein]-peptidylproline (omega=180) = [protein]-peptidylproline (omega=0). Its function is as follows. PPIases accelerate the folding of proteins. It catalyzes the cis-trans isomerization of proline imidic peptide bonds in oligopeptides. May be implicated in the folding, transport, and assembly of proteins. Probably involved in early steps of spliceosomal assembly. The chain is Peptidyl-prolyl cis-trans isomerase CYP63 (CYP63) from Arabidopsis thaliana (Mouse-ear cress).